We begin with the raw amino-acid sequence, 209 residues long: LexA repressor (209 aa).

The H-T-H motif DNA-binding region spans 28 to 48 (RVELAKILGFRSANAAEEHLK). Residues S126 and K163 each act as for autocatalytic cleavage activity in the active site.

This sequence belongs to the peptidase S24 family. Homodimer.

The catalysed reaction is Hydrolysis of Ala-|-Gly bond in repressor LexA.. Its function is as follows. Represses a number of genes involved in the response to DNA damage (SOS response), including recA and lexA. In the presence of single-stranded DNA, RecA interacts with LexA causing an autocatalytic cleavage which disrupts the DNA-binding part of LexA, leading to derepression of the SOS regulon and eventually DNA repair. This Psychromonas ingrahamii (strain DSM 17664 / CCUG 51855 / 37) protein is LexA repressor.